A 207-amino-acid chain; its full sequence is Ras-related protein Rab-7a (207 aa).

N-acetylthreonine is present on Thr2. GTP contacts are provided by Ser17, Gly18, Val19, Gly20, Lys21, Thr22, Ser23, Ser34, Asn35, Tyr37, and Thr40. Thr22 lines the Mg(2+) pocket. The short motif at 28-41 is the Switch 1 element; that stretch reads YVNKKFSNQYKATI. Mg(2+) contacts are provided by Thr40 and Asp63. Position 66 (Gly66) interacts with GTP. The Switch 2 motif lies at 67–82; sequence QERFQSLGVAFYRGAD. Ser72 carries the phosphoserine modification. GTP contacts are provided by Asn125, Lys126, Asp128, Ala156, and Lys157. Residues Lys191 and Lys194 each participate in a glycyl lysine isopeptide (Lys-Gly) (interchain with G-Cter in ubiquitin) cross-link. Residues Cys205 and Cys207 are each lipidated (S-geranylgeranyl cysteine). Cys207 bears the Cysteine methyl ester mark.

It belongs to the small GTPase superfamily. Rab family. In terms of assembly, interacts with NTRK1/TRKA. Interacts with RILP. Interacts with PSMA7. Interacts with RNF115. Interacts with FYCO1. Interacts with the PIK3C3/VPS34-PIK3R4 complex. The GTP-bound form interacts with OSBPL1A. The GTP-bound form interacts with RAC1. Interacts with CLN3. Interacts with CHM, the substrate-binding subunit of the Rab geranylgeranyltransferase complex. Interacts with C9orf72. Does not interact with HPS4 and the BLOC-3 complex (heterodimer of HPS1 and HPS4). Interacts with CLN5. Interacts with PLEKHM1 (via N- and C-terminus). Interacts with PRPH; the interaction is direct. Interacts with VPS13A. The GDP-bound form interacts with RIMOC1. Interacts with the MON1A-CCZ1B complex and this interaction is enhanced in the presence of RIMOC1. Interacts with VPS39 and VPS41. Forms a ternary complex with LAMP2 and RUFY4; the interaction with LAMP2 is mediated by RUFY4 (via RUN and coiled coil domains). Requires Mg(2+) as cofactor. In terms of processing, deubiquitination at Lys-191 and Lys-194 by USP32. Post-translationally, phosphorylated at Ser-72 by LRRK1; phosphorylation is dependent on protein kinase C (PKC) activation of LRRK1. Prenylated. Prenylation is required for association with cellular membranes.

Its subcellular location is the cytoplasmic vesicle. It is found in the phagosome membrane. The protein resides in the late endosome membrane. The protein localises to the lysosome membrane. It localises to the melanosome membrane. Its subcellular location is the autophagosome membrane. It is found in the lipid droplet. The protein resides in the endosome membrane. The protein localises to the mitochondrion membrane. It carries out the reaction GTP + H2O = GDP + phosphate + H(+). Its activity is regulated as follows. Regulated by guanine nucleotide exchange factors (GEFs) which promote the exchange of bound GDP for free GTP. Regulated by GTPase activating proteins (GAPs) which increase the GTP hydrolysis activity. Inhibited by GDP dissociation inhibitors (GDIs). In terms of biological role, the small GTPases Rab are key regulators of intracellular membrane trafficking, from the formation of transport vesicles to their fusion with membranes. Rabs cycle between an inactive GDP-bound form and an active GTP-bound form that is able to recruit to membranes different sets of downstream effectors directly responsible for vesicle formation, movement, tethering and fusion. In its active state, RAB7A binds to a variety of effector proteins playing a key role in the regulation of endo-lysosomal trafficking. Governs early-to-late endosomal maturation, microtubule minus-end as well as plus-end directed endosomal migration and positioning, and endosome-lysosome transport through different protein-protein interaction cascades. Also plays a central role in growth-factor-mediated cell signaling, nutrient-transporter-mediated nutrient uptake, neurotrophin transport in the axons of neurons and lipid metabolism. Also involved in regulation of some specialized endosomal membrane trafficking, such as maturation of melanosomes, pathogen-induced phagosomes (or vacuoles) and autophagosomes. Plays a role in the maturation and acidification of phagosomes that engulf pathogens, such as S.aureus and Mycobacteria. Plays a role in the fusion of phagosomes with lysosomes. In concert with RAC1, plays a role in regulating the formation of RBs (ruffled borders) in osteoclasts. Controls the endosomal trafficking and neurite outgrowth signaling of NTRK1/TRKA. Regulates the endocytic trafficking of the EGF-EGFR complex by regulating its lysosomal degradation. Involved in the ADRB2-stimulated lipolysis through lipophagy, a cytosolic lipase-independent autophagic pathway. Required for the exosomal release of SDCBP, CD63 and syndecan. Required for vesicular trafficking and cell surface expression of ACE2. May play a role in PRPH neuronal intermediate filament assembly. This Canis lupus familiaris (Dog) protein is Ras-related protein Rab-7a (RAB7A).